We begin with the raw amino-acid sequence, 347 residues long: NADH-quinone oxidoreductase subunit H (347 aa).

A run of 8 helical transmembrane segments spans residues 25-45 (ILFM…VAAM), 95-115 (FMFT…FAII), 128-148 (IGIL…LFGG), 168-188 (ISYE…TGSF), 200-220 (GWYI…GVAV), 251-271 (FFIG…CLFF), 284-304 (FIPP…MFVL), and 324-344 (VCLP…LIFS).

The protein belongs to the complex I subunit 1 family. NDH-1 is composed of 14 different subunits. Subunits NuoA, H, J, K, L, M, N constitute the membrane sector of the complex.

The protein localises to the cell inner membrane. The enzyme catalyses a quinone + NADH + 5 H(+)(in) = a quinol + NAD(+) + 4 H(+)(out). NDH-1 shuttles electrons from NADH, via FMN and iron-sulfur (Fe-S) centers, to quinones in the respiratory chain. The immediate electron acceptor for the enzyme in this species is believed to be ubiquinone. Couples the redox reaction to proton translocation (for every two electrons transferred, four hydrogen ions are translocated across the cytoplasmic membrane), and thus conserves the redox energy in a proton gradient. This subunit may bind ubiquinone. In Psychrobacter cryohalolentis (strain ATCC BAA-1226 / DSM 17306 / VKM B-2378 / K5), this protein is NADH-quinone oxidoreductase subunit H.